Here is a 386-residue protein sequence, read N- to C-terminus: Na(+)/H(+) antiporter NhaA (386 aa).

10 helical membrane passes run 10–30 (EFSI…NVAP), 45–65 (LSFH…IAAV), 84–104 (LNPL…YLAL), 116–136 (GWGI…RLIF), 142–162 (VIAF…VIIA), 169–189 (VLPV…IAFI), 261–281 (IIVD…GFSA), 287–307 (WLVF…FALL), 323–343 (HLLV…FVAG), and 358–378 (GAIL…LLGI).

The protein belongs to the NhaA Na(+)/H(+) (TC 2.A.33) antiporter family.

The protein resides in the cell inner membrane. It carries out the reaction Na(+)(in) + 2 H(+)(out) = Na(+)(out) + 2 H(+)(in). Na(+)/H(+) antiporter that extrudes sodium in exchange for external protons. The protein is Na(+)/H(+) antiporter NhaA of Geotalea uraniireducens (strain Rf4) (Geobacter uraniireducens).